The chain runs to 83 residues: Transmembrane protein EP84R (83 aa).

2 helical membrane passes run 31-51 (VIGI…IIIL) and 59-79 (AGSV…FLIY).

Belongs to the asfivirus EP84R family.

The protein localises to the virion membrane. This is Transmembrane protein EP84R from Ornithodoros (relapsing fever ticks).